A 347-amino-acid polypeptide reads, in one-letter code: NADH-ubiquinone oxidoreductase chain 2 (347 aa).

The next 11 helical transmembrane spans lie at 3-23, 25-45, 67-87, 96-116, 122-142, 145-165, 178-198, 200-220, 239-259, 274-294, and 325-345; these read PIIFIIILLTIMLGTIIVMIS, HWLLVWIGFEMNMLAIIPIMM, SMLLMMAVIINLMFSGQWTVM, MLMTMALAMKLGMAPFHFWVP, IPLSSGLILLTWQKLAPMSVL, IFPSINLNLILTLSVLSILIG, IMAYSSIAHMGWMTAVLPYNP, MTLLNLIIYIIMTSTMFTMFM, IMTVLILATLLSMGGLPPLSG, NSIILPTFMAITALLNLYFYM, and FLPTMVVLSTMMLPLTPMLSV.

The protein belongs to the complex I subunit 2 family. Core subunit of respiratory chain NADH dehydrogenase (Complex I) which is composed of 45 different subunits. Interacts with TMEM242.

It localises to the mitochondrion inner membrane. It carries out the reaction a ubiquinone + NADH + 5 H(+)(in) = a ubiquinol + NAD(+) + 4 H(+)(out). Core subunit of the mitochondrial membrane respiratory chain NADH dehydrogenase (Complex I) which catalyzes electron transfer from NADH through the respiratory chain, using ubiquinone as an electron acceptor. Essential for the catalytic activity and assembly of complex I. The polypeptide is NADH-ubiquinone oxidoreductase chain 2 (Bos indicus (Zebu)).